Reading from the N-terminus, the 472-residue chain is Keratin, type I cytoskeletal 14 (472 aa).

Residues 1–114 (MTTCSRQFTS…AGGDGLLVGS (114 aa)) form a head region. Residues 115–150 (EKVTMQNLNDRLASYLDKVRALEEANADLEVKIRDW) are coil 1A. Residues 115–426 (EKVTMQNLND…RLLEGEDAHL (312 aa)) enclose the IF rod domain. The interval 151–168 (YQRQRPAEIKDYSPYFKT) is linker 1. The interval 169 to 260 (IEDLRNKILT…KNHEEEMNAL (92 aa)) is coil 1B. Residues 261–283 (RGQVGGDVNVEMDAAPGVDLSRI) form a linker 12 region. The interval 284 to 422 (LNEMRDQYEK…ATYRRLLEGE (139 aa)) is coil 2. The interval 423–472 (DAHLSSSQFSSGSQSSRDVTSSSRQIRTKVMDVHDGKVVSTHEQVLRTKN) is tail. Residues 425-472 (HLSSSQFSSGSQSSRDVTSSSRQIRTKVMDVHDGKVVSTHEQVLRTKN) form an interaction with Type I keratins and keratin filaments region. The tract at residues 426 to 472 (LSSSQFSSGSQSSRDVTSSSRQIRTKVMDVHDGKVVSTHEQVLRTKN) is disordered. The segment covering 427 to 445 (SSSQFSSGSQSSRDVTSSS) has biased composition (low complexity). The residue at position 435 (Ser-435) is a Phosphoserine.

It belongs to the intermediate filament family. As to quaternary structure, heterotetramer of two type I and two type II keratins. Forms a disulfide-linked heterodimer (via 2B domains) with KRT5 (via 2B domains). Forms a heterodimer with KRT1; the interaction is more abundant in the absence of KRT5. Interacts with PLEC isoform 1C, when in a heterodimer with KRT5. Interacts with TRADD and with keratin filaments. Associates with other type I keratins. Interacts with EPPK1. Interacts with KLHL24. Interacts with PKP1 (via N-terminus) and PKP2. A disulfide bond is formed between rather than within filaments and promotes the formation of a keratin filament cage around the nucleus. In terms of processing, ubiquitinated by the BCR(KLHL24) E3 ubiquitin ligase complex. In terms of tissue distribution, expressed in the corneal epithelium (at protein level). Detected in the basal layer, lowered within the more apically located layers specifically in the stratum spinosum, stratum granulosum but is not detected in stratum corneum. Strongly expressed in the outer root sheath of anagen follicles but not in the germinative matrix, inner root sheath or hair. Found in keratinocytes surrounding the club hair during telogen.

It localises to the cytoplasm. Its subcellular location is the nucleus. Its function is as follows. The nonhelical tail domain is involved in promoting KRT5-KRT14 filaments to self-organize into large bundles and enhances the mechanical properties involved in resilience of keratin intermediate filaments in vitro. The chain is Keratin, type I cytoskeletal 14 (KRT14) from Homo sapiens (Human).